Here is a 207-residue protein sequence, read N- to C-terminus: Ribosomal RNA small subunit methyltransferase G (207 aa).

S-adenosyl-L-methionine is bound by residues Gly-74, Leu-79, 125-126, and Arg-140; that span reads VE.

Belongs to the methyltransferase superfamily. RNA methyltransferase RsmG family.

It localises to the cytoplasm. It catalyses the reaction guanosine(527) in 16S rRNA + S-adenosyl-L-methionine = N(7)-methylguanosine(527) in 16S rRNA + S-adenosyl-L-homocysteine. Its function is as follows. Specifically methylates the N7 position of guanine in position 527 of 16S rRNA. The chain is Ribosomal RNA small subunit methyltransferase G from Shewanella pealeana (strain ATCC 700345 / ANG-SQ1).